A 420-amino-acid chain; its full sequence is Glucose-1-phosphate adenylyltransferase (420 aa).

Alpha-D-glucose 1-phosphate contacts are provided by residues tyrosine 107, glycine 172, 187 to 188 (EK), and serine 205.

This sequence belongs to the bacterial/plant glucose-1-phosphate adenylyltransferase family. As to quaternary structure, homotetramer.

The catalysed reaction is alpha-D-glucose 1-phosphate + ATP + H(+) = ADP-alpha-D-glucose + diphosphate. It functions in the pathway glycan biosynthesis; glycogen biosynthesis. Involved in the biosynthesis of ADP-glucose, a building block required for the elongation reactions to produce glycogen. Catalyzes the reaction between ATP and alpha-D-glucose 1-phosphate (G1P) to produce pyrophosphate and ADP-Glc. This Rhodopseudomonas palustris (strain BisB18) protein is Glucose-1-phosphate adenylyltransferase.